Reading from the N-terminus, the 302-residue chain is Lipooligosaccharide biosynthesis protein lex-1 (302 aa).

A run of 7 repeats spans residues 42–45 (SINQ), 46–49 (SINQ), 50–53 (SINQ), 54–57 (SINQ), 58–61 (SINQ), 62–65 (SINQ), and 66–69 (SINQ). Residues 42-69 (SINQSINQSINQSINQSINQSINQSINQ) are 7 X 4 AA tandem repeats of S-I-N-Q.

This sequence belongs to the glycosyltransferase 25 family.

Its function is as follows. Involved in extracellular lipooligosaccharide (LOS) biosynthesis and virulence expression. Involved in the synthesis of the oligosaccharide moiety of the LOS molecule by adding GalNAc. This is Lipooligosaccharide biosynthesis protein lex-1 (lex1) from Haemophilus influenzae (strain ATCC 51907 / DSM 11121 / KW20 / Rd).